The primary structure comprises 281 residues: Beta-lactamase (281 aa).

An N-terminal signal peptide occupies residues 1–24 (MKKLIFLIVIALVLSACNSNSSHA). The active-site Acyl-ester intermediate is the serine 63. Residue 225-227 (KSG) participates in substrate binding.

This sequence belongs to the class-A beta-lactamase family.

It carries out the reaction a beta-lactam + H2O = a substituted beta-amino acid. The protein is Beta-lactamase (blaZ) of Staphylococcus aureus.